The following is a 153-amino-acid chain: Endoribonuclease YbeY (153 aa).

H116, H120, and H126 together coordinate Zn(2+).

It belongs to the endoribonuclease YbeY family. Requires Zn(2+) as cofactor.

The protein localises to the cytoplasm. Functionally, single strand-specific metallo-endoribonuclease involved in late-stage 70S ribosome quality control and in maturation of the 3' terminus of the 16S rRNA. The chain is Endoribonuclease YbeY from Clavibacter michiganensis subsp. michiganensis (strain NCPPB 382).